We begin with the raw amino-acid sequence, 305 residues long: tRNA pseudouridine synthase B (305 aa).

Catalysis depends on Asp-48, which acts as the Nucleophile.

It belongs to the pseudouridine synthase TruB family. Type 1 subfamily.

The catalysed reaction is uridine(55) in tRNA = pseudouridine(55) in tRNA. In terms of biological role, responsible for synthesis of pseudouridine from uracil-55 in the psi GC loop of transfer RNAs. This Pseudomonas putida (strain ATCC 700007 / DSM 6899 / JCM 31910 / BCRC 17059 / LMG 24140 / F1) protein is tRNA pseudouridine synthase B.